A 218-amino-acid polypeptide reads, in one-letter code: Glutathione S-transferase Mu 7 (218 aa).

In terms of domain architecture, GST N-terminal spans 1–88; the sequence is MPMTLGYWDI…YLGRKHNLCG (88 aa). Glutathione is bound by residues 7–8, 46–50, 59–60, and 72–73; these read YW, WLNEK, NL, and QS. In terms of domain architecture, GST C-terminal spans 90 to 208; sequence TEEERIRVDI…KTSRFLPRPM (119 aa). Tyr116 contributes to the substrate binding site.

This sequence belongs to the GST superfamily. Mu family. In terms of assembly, homodimer.

The protein localises to the cytoplasm. It catalyses the reaction RX + glutathione = an S-substituted glutathione + a halide anion + H(+). Its function is as follows. Conjugation of reduced glutathione to a wide number of exogenous and endogenous hydrophobic electrophiles. The protein is Glutathione S-transferase Mu 7 (Gstm7) of Mus musculus (Mouse).